We begin with the raw amino-acid sequence, 163 residues long: uncharacterized protein (163 aa).

Residues methionine 1 to histidine 10 show a composition bias toward basic and acidic residues. 2 disordered regions span residues methionine 1–serine 21 and serine 71–arginine 112. Residues proline 90 to arginine 105 show a composition bias toward polar residues.

This is an uncharacterized protein from Homo sapiens (Human).